The primary structure comprises 332 residues: dTDP-3,4-didehydro-2,6-dideoxy-alpha-D-glucose 3-reductase (332 aa).

NADP(+) is bound at residue 17–23; it reads CADIAWR. Residue Arg-24 participates in substrate binding. NADP(+)-binding positions include 42–43, Tyr-63, Leu-79, and His-84; that span reads SR. The active-site Proton donor is Lys-102. The NADP(+) site is built by Arg-170 and Asp-182. Substrate-binding residues include Tyr-240 and Thr-260.

The protein belongs to the Gfo/Idh/MocA family. Homotetramer; dimer of dimers.

The enzyme catalyses dTDP-4-dehydro-2,6-dideoxy-alpha-D-glucose + NADP(+) = dTDP-3,4-didehydro-2,6-dideoxy-alpha-D-glucose + NADPH + H(+). Its pathway is antibiotic biosynthesis. Functionally, involved in the biosynthesis of L-digitoxose, an unusual dideoxysugar attached to various pharmacologically active natural products, including the antitumor antibiotic tetrocarcin A, and the antibiotics kijanimicin and jadomycin B. Catalyzes the reduction of the C-3 keto moiety of dTDP-3,4-diketo-2,6-dideoxy-alpha-D-glucose to yield dTDP-4-keto-2,6-dideoxy-alpha-D-glucose. Also able to reduce dTDP-3-keto-6-deoxy-D-galactose and dTDP-3-keto-6-deoxy-D-glucose to yield dTDP-fucose and dTDP-quinovose, respectively. This is dTDP-3,4-didehydro-2,6-dideoxy-alpha-D-glucose 3-reductase from Actinomadura kijaniata.